The sequence spans 171 residues: uncharacterized protein (171 aa).

Disordered stretches follow at residues 1 to 50 (MSHR…THLS) and 71 to 91 (RIDKDAPKHPYNRRGQQPMMK).

This is an uncharacterized protein from Caenorhabditis elegans.